A 348-amino-acid chain; its full sequence is Zinc-type alcohol dehydrogenase-like protein C2E1P3.01 (348 aa).

The protein belongs to the zinc-containing alcohol dehydrogenase family. Quinone oxidoreductase subfamily.

It is found in the mitochondrion. The protein is Zinc-type alcohol dehydrogenase-like protein C2E1P3.01 of Schizosaccharomyces pombe (strain 972 / ATCC 24843) (Fission yeast).